Here is a 436-residue protein sequence, read N- to C-terminus: MEETGVKDVRDLCEKFLDFKREKERLEELLKEYFKRLEELERKLRAHEEKLRIEARRRKTLEKELEMERDEKAELREELRRKEVMIEKLRSDLQRMKKPPLIVGTVEEILDDGRVIVKSSTGPKFVSNVSPTVDRNELEPGANVALNQQSMAVVDVLPSEKDSRVLAMEVDESPDVSYDDIGGLDEQIREIREVVEKPLKEPELFEKVGVEPPKGVLLYGPPGTGKTLLAKAVANHADATFIRLAAPELVQKFIGEGARLVRELFELAREKAPSIIFIDEIDAIGARRMRDATSGDREVQRTLTQLLAEMDGFDPLDDIKVIAATNRKDILDPALLRPGRFDRHIKIPLPDEEGRYEIFKIHTRDMNLAEDVDLQKLAKITEGASGADIKAICTEAGMMAIREDRDIVTMDDFLKAVDRVMGKKEEESGEFKRAYH.

The stretch at 7–98 (KDVRDLCEKF…LRSDLQRMKK (92 aa)) forms a coiled coil. Residues 223–228 (GTGKTL) and histidine 362 each bind ATP. The segment at 434–436 (AYH) is docks into pockets in the proteasome alpha-ring to cause gate opening.

This sequence belongs to the AAA ATPase family. In terms of assembly, homohexamer. The hexameric complex has a two-ring architecture resembling a top hat that caps the 20S proteasome core at one or both ends. Upon ATP-binding, the C-terminus of PAN interacts with the alpha-rings of the proteasome core by binding to the intersubunit pockets.

Its subcellular location is the cytoplasm. ATPase which is responsible for recognizing, binding, unfolding and translocation of substrate proteins into the archaeal 20S proteasome core particle. Is essential for opening the gate of the 20S proteasome via an interaction with its C-terminus, thereby allowing substrate entry and access to the site of proteolysis. Thus, the C-termini of the proteasomal ATPase function like a 'key in a lock' to induce gate opening and therefore regulate proteolysis. Unfolding activity requires energy from ATP hydrolysis, whereas ATP binding alone promotes ATPase-20S proteasome association which triggers gate opening, and supports translocation of unfolded substrates. In Methanopyrus kandleri (strain AV19 / DSM 6324 / JCM 9639 / NBRC 100938), this protein is Proteasome-activating nucleotidase.